Reading from the N-terminus, the 250-residue chain is MSGHSKWATIKRKKAVTDQKRGSLFTKLVKEITIAAKMGGGDPAGNPRLRLAIDTARDNSMPMDNIQRAIKKGTGELEGVTWDEITYEGYGPAGIALIIETATDNRNRTVADIRHIMSRNNGSLGESGSVAWMFQRKGTLDVPRSAAGEDQLMELLLEAGLEDLGSDDENYFTVITDVKDLERVKKALDDAAIMYENAKIDLIPENYIELEAEDARKVIKLIDAFENNDDVQAVYTNMEISESAMSSLNE.

Belongs to the TACO1 family.

The protein localises to the cytoplasm. In Pelodictyon phaeoclathratiforme (strain DSM 5477 / BU-1), this protein is Probable transcriptional regulatory protein Ppha_0657.